Consider the following 230-residue polypeptide: UPF0173 metal-dependent hydrolase RHOS4_08540 (230 aa).

It belongs to the UPF0173 family.

The protein is UPF0173 metal-dependent hydrolase RHOS4_08540 of Cereibacter sphaeroides (strain ATCC 17023 / DSM 158 / JCM 6121 / CCUG 31486 / LMG 2827 / NBRC 12203 / NCIMB 8253 / ATH 2.4.1.) (Rhodobacter sphaeroides).